The chain runs to 231 residues: Histone H1 (231 aa).

Low complexity predominate over residues 1–17 (MSDPAIEVAPVPVASPA). 2 disordered regions span residues 1-44 (MSDP…PVSD) and 124-231 (TKKV…AKKA). Residues 38–112 (THPPVSDMIV…GASGSFKLPA (75 aa)) form the H15 domain. Basic residues-rich tracts occupy residues 145–171 (KVKK…KTTK), 178–213 (PTKK…KAKK), and 221–231 (KAAKKPSAKKA).

This sequence belongs to the histone H1/H5 family.

It localises to the nucleus. It is found in the chromosome. Its function is as follows. Histones H1 are necessary for the condensation of nucleosome chains into higher-order structures. The sequence is that of Histone H1 from Chironomus thummi thummi (Midge).